An 817-amino-acid chain; its full sequence is Verprolin (817 aa).

Residues 1–15 (MAGAPAPPPPPPPPA) are compositionally biased toward pro residues. The segment at 1 to 752 (MAGAPAPPPP…THTNQPDVDV (752 aa)) is disordered. Residues 30–47 (GRDALLGDIRKGMKLKKA) form the WH2 1 domain. Over residues 37–51 (DIRKGMKLKKAETND) the composition is skewed to basic and acidic residues. Residues 62 to 79 (VSSASGSSGTVSSKGPSM) are compositionally biased toward low complexity. Residues 87–106 (MGAPQLGDILAGGIPKLKHI) enclose the WH2 2 domain. Residue Asn-109 is glycosylated (N-linked (GlcNAc...) asparagine). Residues 119–180 (SAPPIPGAVP…VPSSPAPPLP (62 aa)) are compositionally biased toward pro residues. N-linked (GlcNAc...) asparagine glycosylation occurs at Asn-212. Over residues 236–245 (PQAPPPPPTP) the composition is skewed to pro residues. Residues 254-265 (IKPTDNAVSPPS) are compositionally biased toward polar residues. The segment covering 306–335 (SQPPLPSSAPPIPTSHAPPLPPTAPPPPSL) has biased composition (pro residues). Positions 336-348 (PNVTSAPKKATSA) are enriched in low complexity. An N-linked (GlcNAc...) asparagine glycan is attached at Asn-337. Positions 372 to 382 (PVPPTLAPPLP) are enriched in pro residues. Asn-383 carries N-linked (GlcNAc...) asparagine glycosylation. A compositionally biased stretch (low complexity) spans 383–395 (NTTSVPPNKASSM). The span at 396-407 (PAPPPPPPPPPG) shows a compositional bias: pro residues. Positions 408–422 (AFSTSSALSASSIPL) are enriched in low complexity. Over residues 423–432 (APLPPPPPPS) the composition is skewed to pro residues. Residues 447–469 (LTTNKPSASSKQSKISSSSSSSA) show a composition bias toward low complexity. Basic and acidic residues predominate over residues 502-516 (DKQEDVIGSSKDDNV). Positions 518 to 534 (PSPISPSINPPKQSSQN) are enriched in low complexity. The residue at position 519 (Ser-519) is a Phosphoserine. The segment covering 557-579 (APPPHTDAMAPPLPPSAPPPPIT) has biased composition (pro residues). Basic and acidic residues predominate over residues 588–597 (GDDHTNDKSE). A compositionally biased stretch (pro residues) spans 649-661 (PPSPPVAAAPPLP). A compositionally biased stretch (polar residues) spans 713–737 (MDTGTSNSPSKNLKQRLFSTGGSTL). Position 762 is a phosphoserine (Ser-762). 2 N-linked (GlcNAc...) asparagine glycosylation sites follow: Asn-784 and Asn-796. Residues 786-806 (SQMPKPRPFQNKTKLYPSGKG) are disordered.

It belongs to the verprolin family. N-glycosylated.

It is found in the cytoplasm. The protein localises to the cytoskeleton. In terms of biological role, involved in cytoskeletal organization and cellular growth. May exert its effects on the cytoskeleton directly, or indirectly via proline-binding proteins (e.g. profilin) or proteins possessing SH3 domains. This chain is Verprolin (VRP1), found in Saccharomyces cerevisiae (strain ATCC 204508 / S288c) (Baker's yeast).